The chain runs to 261 residues: Imidazole glycerol phosphate synthase subunit HisF (261 aa).

Active-site residues include D16 and D135.

The protein belongs to the HisA/HisF family. Heterodimer of HisH and HisF.

The protein localises to the cytoplasm. It carries out the reaction 5-[(5-phospho-1-deoxy-D-ribulos-1-ylimino)methylamino]-1-(5-phospho-beta-D-ribosyl)imidazole-4-carboxamide + L-glutamine = D-erythro-1-(imidazol-4-yl)glycerol 3-phosphate + 5-amino-1-(5-phospho-beta-D-ribosyl)imidazole-4-carboxamide + L-glutamate + H(+). Its pathway is amino-acid biosynthesis; L-histidine biosynthesis; L-histidine from 5-phospho-alpha-D-ribose 1-diphosphate: step 5/9. Its function is as follows. IGPS catalyzes the conversion of PRFAR and glutamine to IGP, AICAR and glutamate. The HisF subunit catalyzes the cyclization activity that produces IGP and AICAR from PRFAR using the ammonia provided by the HisH subunit. The chain is Imidazole glycerol phosphate synthase subunit HisF from Mycobacterium marinum (strain ATCC BAA-535 / M).